Reading from the N-terminus, the 2144-residue chain is Cadherin EGF LAG seven-pass G-type receptor 2 (2144 aa).

Cadherin domains are found at residues 1–40 (EDQV…APQF), 41–146 (LRDS…PPVF), 147–248 (EQDE…PPVL), and 253–371 (ILFN…SPLL). Topologically, residues 1 to 1605 (EDQVSYTLAI…GEILPLKTLT (1605 aa)) are extracellular. Asn261, Asn301, Asn407, and Asn437 each carry an N-linked (GlcNAc...) asparagine glycan. Residues 453 to 511 (DDNICLREPCENYMRCVSVLRFDSSAPFIASSSVLFRPIHPVGGLRCRCPPGFTGDYCE) form the EGF-like 1; calcium-binding domain. Cystine bridges form between Cys457–Cys468, Cys462–Cys499, Cys501–Cys510, Cys517–Cys528, Cys522–Cys537, Cys539–Cys548, Cys557–Cys568, Cys562–Cys578, and Cys580–Cys590. The region spanning 513 to 549 (EVDLCYSRPCGPHGHCRSREGGYTCLCRDGYTGEHCE) is the EGF-like 2; calcium-binding domain. The EGF-like 3; calcium-binding domain occupies 553–591 (RSGRCTPGVCKNGGTCVNLLVGGFKCDCPSGDFEKPFCQ). In terms of domain architecture, Laminin G-like 1 spans 592-796 (VTTRSFPARS…IANNGTVPGC (205 aa)). N-linked (GlcNAc...) asparagine glycosylation is found at Asn726 and Asn790. 4 cysteine pairs are disulfide-bonded: Cys770-Cys796, Cys803-Cys814, Cys808-Cys823, and Cys825-Cys834. One can recognise an EGF-like 4; calcium-binding domain in the interval 799–835 (KKNVCDSNTCHNGGTCVNQWDAFSCECPLGFGGKSCA). Residue Asn816 is modified to (3R)-3-hydroxyasparagine. One can recognise a Laminin G-like 2 domain in the interval 839–1016 (ANPQRFLGSS…GESINVEPGC (178 aa)). An N-linked (GlcNAc...) asparagine glycan is attached at Asn966. 14 cysteine pairs are disulfide-bonded: Cys986/Cys1016, Cys1022/Cys1033, Cys1027/Cys1042, Cys1044/Cys1053, Cys1057/Cys1068, Cys1062/Cys1080, Cys1082/Cys1091, Cys1112/Cys1124, Cys1114/Cys1131, Cys1133/Cys1146, Cys1149/Cys1161, Cys1151/Cys1168, Cys1170/Cys1179, and Cys1182/Cys1194. In terms of domain architecture, EGF-like 5; calcium-binding spans 1018–1053 (WPDPCDSNPCPTNSYCSNDWDSYSCSCDPGYYGDNC). Asn1035 is modified ((3R)-3-hydroxyasparagine). N-linked (GlcNAc...) asparagine glycosylation is present at Asn1052. An EGF-like 6; calcium-binding domain is found at 1054–1092 (TNVCDLNPCEHQSACTRKPSAPHGYICECLPNYLGPYCE). The EGF-like 7; calcium-binding domain maps to 1108–1147 (TCGPCNCDVSKGFDPDCNKTSGECHCKENHYRPPSSPTCL). The N-linked (GlcNAc...) asparagine glycan is linked to Asn1125. The Laminin EGF-like domain occupies 1149 to 1196 (CDCYPTGSLSRVCDPEDGQCPCKPGVIGRQCDRCDNPFAEVTTNGCEV). N-linked (GlcNAc...) asparagine glycans are attached at residues Asn1249, Asn1268, and Asn1286. One can recognise a GAIN-B domain in the interval 1424 to 1594 (ETTVILPESV…AVLMDVSRRE (171 aa)). Positions 1439–1466 (PMVRSAGPGEAQETEELARRQRRHPELS) are disordered. Disulfide bonds link Cys1544/Cys1576 and Cys1564/Cys1578. Residues 1544 to 1594 (CVFWNHSILVSGTGGWSARGCEVVFRNESHVSCQCNHMTSFAVLMDVSRRE) are GPS. Asn1548 and Asn1570 each carry an N-linked (GlcNAc...) asparagine glycan. A helical transmembrane segment spans residues 1606-1626 (YVALGVTLAALMITFLFLTLL). The Cytoplasmic portion of the chain corresponds to 1627-1641 (RALRSNQHGIRRNLT). A helical transmembrane segment spans residues 1642-1662 (AALGLAQLVFLLGINQADLPF). Residue Ala1663 is a topological domain, extracellular. The chain crosses the membrane as a helical span at residues 1664-1684 (CTVIAILLHFLYLCTFSWALL). Over 1685-1705 (EALHLYRALTEVRDVNASPMR) the chain is Cytoplasmic. The helical transmembrane segment at 1706 to 1726 (FYYMLGWGVPAFITGLAVGLD) threads the bilayer. The Extracellular segment spans residues 1727–1744 (PEGYGNPDFCWLSIYDTL). The helical transmembrane segment at 1745-1765 (IWSFAGPVAFAVSMSVFLYIL) threads the bilayer. The Cytoplasmic portion of the chain corresponds to 1766–1789 (SARASCAAQRQGFEKKGPVSGLRS). A helical transmembrane segment spans residues 1790–1810 (SFTVLLLLSATWLLALLSVNS). Residues 1811-1816 (DTLLFH) are Extracellular-facing. Residues 1817 to 1837 (YLFAACNCVQGPFIFLSYVVL) form a helical membrane-spanning segment. Topologically, residues 1838–2144 (SKEVRKALKF…SEFLFFNFLH (307 aa)) are cytoplasmic. Positions 1914–2109 (TLNPGQVPPG…PPRPPPRQSL (196 aa)) are disordered. The span at 1943-1955 (TDSDSDLSLEDDQ) shows a compositional bias: acidic residues. Residues 2016-2025 (GTTTKENSGS) show a composition bias toward polar residues. Over residues 2028–2040 (LEERPRENGDALT) the composition is skewed to basic and acidic residues. Residues 2082-2095 (GTGSSRGSTASEGS) show a composition bias toward polar residues.

Belongs to the G-protein coupled receptor 2 family. LN-TM7 subfamily. Heterodimer of 2 chains generated by proteolytic processing; the large extracellular N-terminal fragment and the membrane-bound C-terminal fragment predominantly remain associated and non-covalently linked. Post-translationally, the iron and 2-oxoglutarate dependent 3-hydroxylation of aspartate and asparagine is (R) stereospecific within EGF domains. Autoproteolytically processed at the GPS region of the GAIN-B domain; this cleavage modulates receptor activity. Expressed in the brain. High expression in cerebellum and olfactory bulb. Weaker expression in cerebral cortex, hippocampus and brain stem.

The protein localises to the cell membrane. Functionally, receptor that may have an important role in cell/cell signaling during nervous system formation. This is Cadherin EGF LAG seven-pass G-type receptor 2 from Rattus norvegicus (Rat).